The sequence spans 287 residues: 2-dehydro-3-deoxyphosphooctonate aldolase (287 aa).

It belongs to the KdsA family.

The protein resides in the cytoplasm. The enzyme catalyses D-arabinose 5-phosphate + phosphoenolpyruvate + H2O = 3-deoxy-alpha-D-manno-2-octulosonate-8-phosphate + phosphate. It participates in carbohydrate biosynthesis; 3-deoxy-D-manno-octulosonate biosynthesis; 3-deoxy-D-manno-octulosonate from D-ribulose 5-phosphate: step 2/3. It functions in the pathway bacterial outer membrane biogenesis; lipopolysaccharide biosynthesis. The chain is 2-dehydro-3-deoxyphosphooctonate aldolase from Rhodopseudomonas palustris (strain ATCC BAA-98 / CGA009).